Here is a 429-residue protein sequence, read N- to C-terminus: Glutamate-1-semialdehyde 2,1-aminomutase (429 aa).

Residue Lys-267 is modified to N6-(pyridoxal phosphate)lysine.

Belongs to the class-III pyridoxal-phosphate-dependent aminotransferase family. HemL subfamily. As to quaternary structure, homodimer. Pyridoxal 5'-phosphate serves as cofactor.

The protein localises to the cytoplasm. The catalysed reaction is (S)-4-amino-5-oxopentanoate = 5-aminolevulinate. It participates in porphyrin-containing compound metabolism; protoporphyrin-IX biosynthesis; 5-aminolevulinate from L-glutamyl-tRNA(Glu): step 2/2. The protein is Glutamate-1-semialdehyde 2,1-aminomutase of Stenotrophomonas maltophilia (strain K279a).